Here is a 398-residue protein sequence, read N- to C-terminus: MASADKGLEEIQEGQIESNYDETVDSFDTMNLKPELLRGVYAYGFERPSAIQQRAIMPVIKGHDVIAQAQSGTGKTATFSISVLQKLDPNVKQCQALILAPTRELAQQIQKVVVAIGDFMNVECHACIGGTSVRDDMKALQDGPQVVVGTPGRVHDMIQRRFLKTDSMKMFVLDEADEMLSRGFTEQIYDIFQLLPQSTQVVLLSATMPQDVLEVTTKFMRDPVRILVKKAELTLEGIKQFYIAVEKEDWKLDTLSDLYETVTITQAVIFCNTRRKVDWLTDKLTARDFTVSAMHGDMDQGQRDLIMKEFRSGSSRVLIATDLLARGIDVQQVSLVINYDLPANRENYIHRIGRGGRFGRKGVAINFVTAEDVRMMREIEQFYSTQIEEMPMNVADLI.

Positions 25-53 (DSFDTMNLKPELLRGVYAYGFERPSAIQQ) match the Q motif motif. Residues 56-226 (IMPVIKGHDV…TKFMRDPVRI (171 aa)) form the Helicase ATP-binding domain. Position 69-76 (69-76 (AQSGTGKT)) interacts with ATP. The DEAD box signature appears at 174-177 (DEAD). Residues 237–398 (GIKQFYIAVE…EMPMNVADLI (162 aa)) form the Helicase C-terminal domain.

Belongs to the DEAD box helicase family. eIF4A subfamily. Component of the eIF4F complex, which composition varies with external and internal environmental conditions. It is composed of at least eIF4A, eIF4E and eIF4G.

It is found in the cytoplasm. The catalysed reaction is ATP + H2O = ADP + phosphate + H(+). Its function is as follows. ATP-dependent RNA helicase which is a subunit of the eIF4F complex involved in cap recognition and is required for mRNA binding to ribosome. In the current model of translation initiation, eIF4A unwinds RNA secondary structures in the 5'-UTR of mRNAs which is necessary to allow efficient binding of the small ribosomal subunit, and subsequent scanning for the initiator codon. This Sclerotinia sclerotiorum (strain ATCC 18683 / 1980 / Ss-1) (White mold) protein is ATP-dependent RNA helicase eIF4A (tif1).